The sequence spans 530 residues: UDP-glucuronosyltransferase 1A9 (530 aa).

The first 25 residues, 1–25, serve as a signal peptide directing secretion; the sequence is MACTGWTSPLPLCVCLLLTCGFAEA. The N-linked (GlcNAc...) asparagine glycan is linked to asparagine 71. The residue at position 99 (lysine 99) is an N6-succinyllysine. Residues asparagine 292 and asparagine 344 are each glycosylated (N-linked (GlcNAc...) asparagine). A helical membrane pass occupies residues 488–504; that stretch reads VIGFLLAVVLTVAFITF.

Belongs to the UDP-glycosyltransferase family. In terms of assembly, homodimer. Homooligomer. Interacts with UGT1A1, UGT1A3, UGT1A4, UGT1A6, UGT1A7, UGT1A8 and UGT1A10 to form heterodimers. Isoform 1 interacts with isoform 2/i2 suggesting that oligomerization is involved in negative regulation of transferase activity by isoform 2. Isoform 1 also interacts with respective i2 isoforms of UGT1A1, UGT1A3, UGT1A4, UGT1A6, UGT1A7, UGT1A8 and UGT1A10. Expressed in liver, kidney, colon, esophagus and small intestine.

It localises to the endoplasmic reticulum membrane. It carries out the reaction glucuronate acceptor + UDP-alpha-D-glucuronate = acceptor beta-D-glucuronoside + UDP + H(+). The catalysed reaction is 2-hydroxy-17beta-estradiol + UDP-alpha-D-glucuronate = 2-hydroxy-17beta-estradiol 3-O-(beta-D-glucuronate) + UDP + H(+). The enzyme catalyses 4-hydroxy-17beta-estradiol + UDP-alpha-D-glucuronate = 17beta-estradiol 4-O-(beta-D-glucuronate) + UDP + H(+). It catalyses the reaction 2-hydroxyestrone + UDP-alpha-D-glucuronate = 2-hydroxyestrone 3-O-(beta-D-glucuronate) + UDP + H(+). It carries out the reaction 4-hydroxyestrone + UDP-alpha-D-glucuronate = estrone 4-O-(beta-D-glucuronate) + UDP + H(+). The catalysed reaction is prunetin + UDP-alpha-D-glucuronate = prunetin-5-O-beta-D-glucuronide + UDP. The enzyme catalyses 8-iso-prostaglandin F2alpha + UDP-alpha-D-glucuronate = 8-iso-prostaglandin F2alpha-glucuronide + UDP + H(+). It catalyses the reaction 5-epi-5-F2t-IsoP + UDP-alpha-D-glucuronate = 5-epi-5-F2t-IsoP-glucuronide + UDP + H(+). It carries out the reaction (5Z,8Z,11Z,14Z)-eicosatetraenoate + UDP-alpha-D-glucuronate = O-[(5Z),(8Z),(11Z),(14Z)-eicosatetraenoyl]-beta-D-glucuronate + UDP. The catalysed reaction is 15-hydroxy-(5Z,8Z,11Z,13E)-eicosatetraenoate + UDP-alpha-D-glucuronate = 15-O-(beta-D-glucuronosyl)-(5Z,8Z,11Z,14Z)-eicosatetraenoate + UDP + H(+). The enzyme catalyses prostaglandin B1 + UDP-alpha-D-glucuronate = 15-O-(beta-D-glucuronosyl)-prostaglandin B1 + UDP + H(+). It catalyses the reaction (E)-ferulate + UDP-alpha-D-glucuronate = (E)-4-O-(beta-D-glucuronosyl)-ferulate + UDP + H(+). It carries out the reaction (E)-ferulate + UDP-alpha-D-glucuronate = (E)-ferulic acid beta-D-glucuronate ester + UDP. The catalysed reaction is candesartan + UDP-alpha-D-glucuronate = candesartan O-beta-D-glucuronoside + UDP. The enzyme catalyses SN-38 + UDP-alpha-D-glucuronate = SN-38 O-beta-D-glucuronide + UDP + H(+). It catalyses the reaction mycophenolate + UDP-alpha-D-glucuronate = mycophenolate 7-O-beta-D-glucuronide + UDP + H(+). UDP-glucuronosyltransferase (UGT) that catalyzes phase II biotransformation reactions in which lipophilic substrates are conjugated with glucuronic acid to increase the metabolite's water solubility, thereby facilitating excretion into either the urine or bile. Essential for the elimination and detoxification of drugs, xenobiotics and endogenous compounds. Catalyzes the glucuronidation of endogenous estrogen hormones such as estradiol and estrone. Involved in the glucuronidation of arachidonic acid (AA) and AA-derived eicosanoids including 15-HETE, PGB1 and F2-isoprostanes (8-iso-PGF2alpha and 5-epi-5-F2t-IsoP). Glucuronates the phytochemical ferulic acid efficently at both the phenolic or the carboxylic acid group. Also catalyzes the glucuronidation of the isoflavones genistein, daidzein, glycitein, formononetin, biochanin A and prunetin, which are phytoestrogens with anticancer and cardiovascular properties. Involved in the glucuronidation of the AGTR1 angiotensin receptor antagonist caderastan, a drug which can inhibit the effect of angiotensin II. Involved in the biotransformation of 7-ethyl-10-hydroxycamptothecin (SN-38), the pharmacologically active metabolite of the anticancer drug irinotecan. Also metabolizes mycophenolate, an immunosuppressive agent. In terms of biological role, lacks UGT glucuronidation activity but acts as a negative regulator of isoform 1. The polypeptide is UDP-glucuronosyltransferase 1A9 (Homo sapiens (Human)).